The following is a 325-amino-acid chain: Zinc-type alcohol dehydrogenase-like protein C337.11 (325 aa).

The protein belongs to the zinc-containing alcohol dehydrogenase family. Quinone oxidoreductase subfamily.

The protein resides in the cytoplasm. It localises to the nucleus. This Schizosaccharomyces pombe (strain 972 / ATCC 24843) (Fission yeast) protein is Zinc-type alcohol dehydrogenase-like protein C337.11.